The chain runs to 134 residues: Viral interleukin-8 homolog (134 aa).

The signal sequence occupies residues Met-1–Gly-22.

It belongs to the intercrine alpha (chemokine CxC) family. In terms of assembly, homodimer.

It localises to the secreted. Plays a role in the early phase of cytolytic infections presumably by recruiting host B or T-lymphocytes. The protein is Viral interleukin-8 homolog (MDV078) of Gallus gallus (Chicken).